The primary structure comprises 196 residues: Nucleoid occlusion factor SlmA (196 aa).

An HTH tetR-type domain is found at 6 to 66; the sequence is RNRREEILQA…GLIEFVEDTL (61 aa). A DNA-binding region (H-T-H motif) is located at residues 29–48; that stretch reads TTAKLAANLGVSEAALYRHF. Residues 108–135 adopt a coiled-coil conformation; sequence DALMGEHDRLRGRMEDLFNRIESSIKQI.

Belongs to the nucleoid occlusion factor SlmA family. Homodimer. Interacts with FtsZ.

The protein localises to the cytoplasm. The protein resides in the nucleoid. In terms of biological role, required for nucleoid occlusion (NO) phenomenon, which prevents Z-ring formation and cell division over the nucleoid. Acts as a DNA-associated cell division inhibitor that binds simultaneously chromosomal DNA and FtsZ, and disrupts the assembly of FtsZ polymers. SlmA-DNA-binding sequences (SBS) are dispersed on non-Ter regions of the chromosome, preventing FtsZ polymerization at these regions. The polypeptide is Nucleoid occlusion factor SlmA (Idiomarina loihiensis (strain ATCC BAA-735 / DSM 15497 / L2-TR)).